Consider the following 332-residue polypeptide: Ribosomal RNA small subunit methyltransferase H (332 aa).

Residues 37–39 (GGY), D55, F82, D103, and Q110 contribute to the S-adenosyl-L-methionine site. Positions 281-332 (TKRPVTPSDEETAANPRARSAKLRAGERTAAPAQPEAPLPHWPTLASVMGRR) are disordered.

It belongs to the methyltransferase superfamily. RsmH family.

The protein resides in the cytoplasm. The enzyme catalyses cytidine(1402) in 16S rRNA + S-adenosyl-L-methionine = N(4)-methylcytidine(1402) in 16S rRNA + S-adenosyl-L-homocysteine + H(+). Specifically methylates the N4 position of cytidine in position 1402 (C1402) of 16S rRNA. The polypeptide is Ribosomal RNA small subunit methyltransferase H (Rhodopseudomonas palustris (strain BisA53)).